A 503-amino-acid polypeptide reads, in one-letter code: MESLLAAGAGGIGVAAAAAVVAATLAVVPPKDRGNNPPPAVPGLPVIGNMHQLKEKKPHHTFTKWSKTYGPIYTIKTGASSVVVLNSTEVAKEAMIEKFSSISTKKLPKALSVISRKNMVSISDYGDFYKMAKRNIMLAILGFNAQKHFCDTRERMVSNVLSSLHKLVAVDPHSPLNFREVYTTELFGLSLIQNLGEDVCSVYVEEFGREISKEEIFHVLVHEILSCVVEPDWRDYFPYLSWLPNKSFETIVSSTEFRRDAVMNALIKRQKERIARGEARISYIDFLLEAKNSTQLTDHQLMLLLAESIAAAVDTVLVTTEWAMYELAKNPDKQEWLYREIREVCGGKAVTEEDLPRLPYLDAVLHETLRLHSPVPVLPTRFVHDDTTLAGYDVPAGTQVMINVFGCHMDEEAWESPGEWSPERFLGEGFKLADRYKTLAFGAGRRTCAGSQQAVSIACVAIARFVQELQWTLREGDGDKEDTMQYTALKLHPLHVHLKPRGS.

The chain crosses the membrane as a helical span at residues 8–28 (GAGGIGVAAAAAVVAATLAVV). C448 provides a ligand contact to heme.

The protein belongs to the cytochrome P450 family. The cofactor is heme. Expressed in roots.

Its subcellular location is the membrane. Functionally, may hydroxylate diterpenes. The sequence is that of Ent-kaurene oxidase-like 5 from Oryza sativa subsp. japonica (Rice).